The primary structure comprises 354 residues: MTELKNDRYLRALLRQPVDVTPVWMMRQAGRYLPEYKATRAQAGDFMSLCKNAELACEVTLQPLRRYPLDAAILFSDILTIPDAMGLGLYFEAGEGPRFTAPVTCKADVDKLPIPDPEDELGYVMNAVRTIRRELKGEVPLIGFSGSPWTLATYMVEGGSSKAFTVIKKMMYADPQALHLLLDKLAKSVTLYLNAQIKAGAQSVMIFDTWGGVLTGRDYQQFSLYYMHKIVDGLLRENDGRRVPVTLFTKGGGQWLEAMAETGCDALGLDWTTDIADARRRVGHKVALQGNMDPSMLYAPPARIEDEVATILAGFGQGEGHVFNLGHGIHQDVPPEHAGAFVEAVHRLSAQYHS.

Residues 27–31 (RQAGR), Asp-77, Tyr-154, Thr-209, and His-327 contribute to the substrate site.

The protein belongs to the uroporphyrinogen decarboxylase family. In terms of assembly, homodimer.

Its subcellular location is the cytoplasm. It carries out the reaction uroporphyrinogen III + 4 H(+) = coproporphyrinogen III + 4 CO2. It participates in porphyrin-containing compound metabolism; protoporphyrin-IX biosynthesis; coproporphyrinogen-III from 5-aminolevulinate: step 4/4. Catalyzes the decarboxylation of four acetate groups of uroporphyrinogen-III to yield coproporphyrinogen-III. The sequence is that of Uroporphyrinogen decarboxylase from Salmonella paratyphi A (strain ATCC 9150 / SARB42).